A 387-amino-acid polypeptide reads, in one-letter code: Phosphoglycerate kinase (387 aa).

Residues 21 to 23, Arg36, 59 to 62, Arg113, and Arg146 each bind substrate; these read DLN and HLGR. ATP-binding positions include Lys197, Glu314, and 340 to 343; that span reads GGDT.

This sequence belongs to the phosphoglycerate kinase family. Monomer.

The protein localises to the cytoplasm. It carries out the reaction (2R)-3-phosphoglycerate + ATP = (2R)-3-phospho-glyceroyl phosphate + ADP. It functions in the pathway carbohydrate degradation; glycolysis; pyruvate from D-glyceraldehyde 3-phosphate: step 2/5. This is Phosphoglycerate kinase from Pseudomonas fluorescens (strain ATCC BAA-477 / NRRL B-23932 / Pf-5).